The primary structure comprises 120 residues: Alanine racemase (120 aa).

Tyrosine 24 functions as the Proton acceptor; specific for L-alanine in the catalytic mechanism.

This sequence belongs to the alanine racemase family. Homodimer. It depends on pyridoxal 5'-phosphate as a cofactor.

It catalyses the reaction L-alanine = D-alanine. Its function is as follows. Highly specific to D- and L-alanine and does not catalyze the racemization of other amino acids. This is Alanine racemase from Penaeus monodon (Giant tiger prawn).